Reading from the N-terminus, the 381-residue chain is L-lactate dehydrogenase (381 aa).

The FMN hydroxy acid dehydrogenase domain maps to 1–380 (MIISASTDYR…TRDSLVRELG (380 aa)). Y24 is a binding site for substrate. Residues S106 and Q127 each coordinate FMN. Y129 is a binding site for substrate. Position 155 (T155) interacts with FMN. R164 contacts substrate. K251 is an FMN binding site. The active-site Proton acceptor is the H275. R278 provides a ligand contact to substrate. 306 to 330 (DSGIRSGLDVVRMIALGADTVLIGR) is a binding site for FMN.

It belongs to the FMN-dependent alpha-hydroxy acid dehydrogenase family. Homotetramer. FMN serves as cofactor.

It is found in the cell inner membrane. It catalyses the reaction (S)-lactate + A = pyruvate + AH2. Catalyzes the conversion of L-lactate to pyruvate. Is coupled to the respiratory chain. The polypeptide is L-lactate dehydrogenase (Pseudomonas putida (strain GB-1)).